A 144-amino-acid chain; its full sequence is uncharacterized protein (144 aa).

2 helical membrane-spanning segments follow: residues 10–30 (ILTRSSIIIGVIILVASGLGP) and 60–80 (YVFLIYTVSLTKMVGTLAIAV).

It localises to the membrane. This is an uncharacterized protein from Saccharomyces cerevisiae (strain ATCC 204508 / S288c) (Baker's yeast).